The chain runs to 278 residues: UPF0758 protein BURPS668_0979 (278 aa).

Residues 1 to 64 (MQYEIVSAGE…ATAAARRGRD (64 aa)) form a disordered region. Positions 22 to 59 (AAAPAAPSSAVPSSAALSSAALSSAARPTGAPPATAAA) are enriched in low complexity. In terms of domain architecture, MPN spans 156–278 (LVDSPGAVDD…TFSFAQAGWI (123 aa)). Zn(2+) is bound by residues His227, His229, and Asp240. The JAMM motif signature appears at 227–240 (HNHPSGAVRPSAAD).

This sequence belongs to the UPF0758 family.

In Burkholderia pseudomallei (strain 668), this protein is UPF0758 protein BURPS668_0979.